Consider the following 530-residue polypeptide: Probable flavin-containing monooxygenase 1 (530 aa).

FAD-binding positions include 17 to 21 (GAGVS), E38, 46 to 47 (VW), and 58 to 59 (QS). Position 219-222 (219-222 (SAID)) interacts with NADP(+).

It belongs to the FMO family. FAD serves as cofactor.

Required for the establishment of systemic acquired resistance (SAR). Not involved in local defense mechanisms. Confers a salicylic acid-dependent (SA) resistance to virulent pathogens such as P.syringae pv tomato and H.parasitica. In Arabidopsis thaliana (Mouse-ear cress), this protein is Probable flavin-containing monooxygenase 1 (FMO1).